The sequence spans 173 residues: ATP synthase subunit delta (173 aa).

The protein belongs to the ATPase delta chain family. In terms of assembly, F-type ATPases have 2 components, F(1) - the catalytic core - and F(0) - the membrane proton channel. F(1) has five subunits: alpha(3), beta(3), gamma(1), delta(1), epsilon(1). F(0) has three main subunits: a(1), b(2) and c(10-14). The alpha and beta chains form an alternating ring which encloses part of the gamma chain. F(1) is attached to F(0) by a central stalk formed by the gamma and epsilon chains, while a peripheral stalk is formed by the delta and b chains.

Its subcellular location is the cell inner membrane. F(1)F(0) ATP synthase produces ATP from ADP in the presence of a proton or sodium gradient. F-type ATPases consist of two structural domains, F(1) containing the extramembraneous catalytic core and F(0) containing the membrane proton channel, linked together by a central stalk and a peripheral stalk. During catalysis, ATP synthesis in the catalytic domain of F(1) is coupled via a rotary mechanism of the central stalk subunits to proton translocation. Its function is as follows. This protein is part of the stalk that links CF(0) to CF(1). It either transmits conformational changes from CF(0) to CF(1) or is implicated in proton conduction. The chain is ATP synthase subunit delta from Campylobacter jejuni subsp. jejuni serotype O:6 (strain 81116 / NCTC 11828).